A 321-amino-acid polypeptide reads, in one-letter code: CPX chromosomal region candidate gene 1 protein homolog (321 aa).

Positions 1 to 83 (MSSPTKEGSD…TEIQKDQREE (83 aa)) are disordered. Composition is skewed to polar residues over residues 21-32 (NEPSNDCTTDIE) and 44-60 (VETN…TSQE).

The polypeptide is CPX chromosomal region candidate gene 1 protein homolog (CPXCR1) (Macaca fascicularis (Crab-eating macaque)).